An 88-amino-acid polypeptide reads, in one-letter code: Protein transport protein Sec61 subunit beta (88 aa).

Residues 1–41 (MDSSVPGGQRTLQKRRNAQLQKEKKANQTPASPRQAGFGGS) are disordered. Residues 1–60 (MDSSVPGGQRTLQKRRNAQLQKEKKANQTPASPRQAGFGGSSSSILKLYTDEANGLRVDP) lie on the Cytoplasmic side of the membrane. A helical transmembrane segment spans residues 61–81 (LVVLFLAVAFVFSVVALHVVA).

The protein belongs to the SEC61-beta family. As to quaternary structure, heterotrimeric complex composed of SEC61, SEB1 and SSS1.

Its subcellular location is the endoplasmic reticulum membrane. Its function is as follows. Necessary for protein translocation in the endoplasmic reticulum. The sequence is that of Protein transport protein Sec61 subunit beta (SBH1) from Kluyveromyces lactis (strain ATCC 8585 / CBS 2359 / DSM 70799 / NBRC 1267 / NRRL Y-1140 / WM37) (Yeast).